We begin with the raw amino-acid sequence, 125 residues long: Small ribosomal subunit protein uS13 (125 aa).

The protein belongs to the universal ribosomal protein uS13 family. Part of the 30S ribosomal subunit. Forms a loose heterodimer with protein S19. Forms two bridges to the 50S subunit in the 70S ribosome.

In terms of biological role, located at the top of the head of the 30S subunit, it contacts several helices of the 16S rRNA. In the 70S ribosome it contacts the 23S rRNA (bridge B1a) and protein L5 of the 50S subunit (bridge B1b), connecting the 2 subunits; these bridges are implicated in subunit movement. Contacts the tRNAs in the A and P-sites. This chain is Small ribosomal subunit protein uS13, found in Orientia tsutsugamushi (strain Boryong) (Rickettsia tsutsugamushi).